The chain runs to 129 residues: Probable tautomerase YrdN (129 aa).

The active-site Proton acceptor; via imino nitrogen is Pro2.

This sequence belongs to the 4-oxalocrotonate tautomerase family.

Functionally, putative target of GltR. This is Probable tautomerase YrdN (yrdN) from Bacillus subtilis (strain 168).